The chain runs to 738 residues: Coiled-coil domain-containing protein 142 (738 aa).

The disordered stretch occupies residues 1-34; it reads MARASSSSGPLPPLANVPSSWAQPVGAGEERDEG. Positions 69-92 form a coiled coil; sequence ALQRLRATLLRLHREREQLLRARD. The segment at 682–704 is disordered; it reads LSTLGGGGRGGGGGGGPGPSPEA. The span at 685 to 698 shows a compositional bias: gly residues; the sequence is LGGGGRGGGGGGGP.

The chain is Coiled-coil domain-containing protein 142 (Ccdc142) from Mus musculus (Mouse).